Consider the following 715-residue polypeptide: Fatty acid oxidation complex subunit alpha (715 aa).

Residues 1 to 190 (MIYEGKAITV…KVGAVDAVVA (190 aa)) are enoyl-CoA hydratase/isomerase. Asp297 contacts substrate. Residues 312-715 (HDVKQAAVLG…MAKNGQRFFN (404 aa)) are 3-hydroxyacyl-CoA dehydrogenase. Residues Met325, Asp344, 401 to 403 (VVE), Lys408, and Ser430 contribute to the NAD(+) site. His451 functions as the For 3-hydroxyacyl-CoA dehydrogenase activity in the catalytic mechanism. Asn454 provides a ligand contact to NAD(+). Substrate contacts are provided by Asn501 and Tyr660.

It in the N-terminal section; belongs to the enoyl-CoA hydratase/isomerase family. In the C-terminal section; belongs to the 3-hydroxyacyl-CoA dehydrogenase family. Heterotetramer of two alpha chains (FadB) and two beta chains (FadA).

The catalysed reaction is a (3S)-3-hydroxyacyl-CoA + NAD(+) = a 3-oxoacyl-CoA + NADH + H(+). It carries out the reaction a (3S)-3-hydroxyacyl-CoA = a (2E)-enoyl-CoA + H2O. The enzyme catalyses a 4-saturated-(3S)-3-hydroxyacyl-CoA = a (3E)-enoyl-CoA + H2O. It catalyses the reaction (3S)-3-hydroxybutanoyl-CoA = (3R)-3-hydroxybutanoyl-CoA. The catalysed reaction is a (3Z)-enoyl-CoA = a 4-saturated (2E)-enoyl-CoA. It carries out the reaction a (3E)-enoyl-CoA = a 4-saturated (2E)-enoyl-CoA. The protein operates within lipid metabolism; fatty acid beta-oxidation. Involved in the aerobic and anaerobic degradation of long-chain fatty acids via beta-oxidation cycle. Catalyzes the formation of 3-oxoacyl-CoA from enoyl-CoA via L-3-hydroxyacyl-CoA. It can also use D-3-hydroxyacyl-CoA and cis-3-enoyl-CoA as substrate. The polypeptide is Fatty acid oxidation complex subunit alpha (Pseudomonas putida (strain GB-1)).